Reading from the N-terminus, the 243-residue chain is Probable HTH-type transcriptional regulator GfsR (243 aa).

Positions 154–179 (AAVARPDTSGSATGRTGDSSPSLALS) are disordered. Positions 161–178 (TSGSATGRTGDSSPSLAL) are enriched in polar residues. The HTH luxR-type domain maps to 171–236 (DSSPSLALSP…QALLRWLGHP (66 aa)). Positions 195 to 214 (VREIAVEMRLAEKTVRNYLS) form a DNA-binding region, H-T-H motif.

The protein operates within antibiotic biosynthesis. Functionally, probable DNA-binding protein that contributes to the control of expression of the biosynthesis operon of the 16-membered macrolide antibiotics FD-891 and FD-892. Might be a member of a two-component regulatory system; the putative sensor kinase gene is unknown. This Streptomyces halstedii protein is Probable HTH-type transcriptional regulator GfsR.